The chain runs to 454 residues: Phosphoglucosamine mutase (454 aa).

The active-site Phosphoserine intermediate is serine 104. Mg(2+) contacts are provided by serine 104, aspartate 241, aspartate 243, and aspartate 245. Serine 104 carries the phosphoserine modification.

Belongs to the phosphohexose mutase family. It depends on Mg(2+) as a cofactor. In terms of processing, activated by phosphorylation.

It catalyses the reaction alpha-D-glucosamine 1-phosphate = D-glucosamine 6-phosphate. Its function is as follows. Catalyzes the conversion of glucosamine-6-phosphate to glucosamine-1-phosphate. This Paenarthrobacter aurescens (strain TC1) protein is Phosphoglucosamine mutase.